Here is a 419-residue protein sequence, read N- to C-terminus: Gamma-glutamyl phosphate reductase (419 aa).

Belongs to the gamma-glutamyl phosphate reductase family.

The protein localises to the cytoplasm. It carries out the reaction L-glutamate 5-semialdehyde + phosphate + NADP(+) = L-glutamyl 5-phosphate + NADPH + H(+). It functions in the pathway amino-acid biosynthesis; L-proline biosynthesis; L-glutamate 5-semialdehyde from L-glutamate: step 2/2. Its function is as follows. Catalyzes the NADPH-dependent reduction of L-glutamate 5-phosphate into L-glutamate 5-semialdehyde and phosphate. The product spontaneously undergoes cyclization to form 1-pyrroline-5-carboxylate. In Bordetella bronchiseptica (strain ATCC BAA-588 / NCTC 13252 / RB50) (Alcaligenes bronchisepticus), this protein is Gamma-glutamyl phosphate reductase.